Consider the following 197-residue polypeptide: ATP-dependent Clp protease proteolytic subunit 1 (197 aa).

Histidine 126 is a catalytic residue.

The protein belongs to the peptidase S14 family. As to quaternary structure, fourteen ClpP subunits assemble into 2 heptameric rings which stack back to back to give a disk-like structure with a central cavity, resembling the structure of eukaryotic proteasomes.

It is found in the cytoplasm. It catalyses the reaction Hydrolysis of proteins to small peptides in the presence of ATP and magnesium. alpha-casein is the usual test substrate. In the absence of ATP, only oligopeptides shorter than five residues are hydrolyzed (such as succinyl-Leu-Tyr-|-NHMec, and Leu-Tyr-Leu-|-Tyr-Trp, in which cleavage of the -Tyr-|-Leu- and -Tyr-|-Trp bonds also occurs).. Its function is as follows. Cleaves peptides in various proteins in a process that requires ATP hydrolysis. Has a chymotrypsin-like activity. Plays a major role in the degradation of misfolded proteins. The polypeptide is ATP-dependent Clp protease proteolytic subunit 1 (Nocardia farcinica (strain IFM 10152)).